Reading from the N-terminus, the 364-residue chain is Heme A synthase (364 aa).

8 helical membrane-spanning segments follow: residues 25 to 45 (ALRL…LVGG), 111 to 131 (FLAR…WATG), 139 to 159 (WPLV…WWMV), 174 to 194 (LATH…VMRG), 212 to 232 (AIAL…VAGL), 270 to 290 (VQFV…YHMV), 305 to 325 (SVVL…ALLL), and 327 to 347 (VPLD…GFTV). Residue His-274 coordinates heme. Position 335 (His-335) interacts with heme.

Belongs to the COX15/CtaA family. Type 2 subfamily. In terms of assembly, interacts with CtaB. It depends on heme b as a cofactor.

It localises to the cell membrane. It carries out the reaction Fe(II)-heme o + 2 A + H2O = Fe(II)-heme a + 2 AH2. It functions in the pathway porphyrin-containing compound metabolism; heme A biosynthesis; heme A from heme O: step 1/1. Its function is as follows. Catalyzes the conversion of heme O to heme A by two successive hydroxylations of the methyl group at C8. The first hydroxylation forms heme I, the second hydroxylation results in an unstable dihydroxymethyl group, which spontaneously dehydrates, resulting in the formyl group of heme A. In Allorhizobium ampelinum (strain ATCC BAA-846 / DSM 112012 / S4) (Agrobacterium vitis (strain S4)), this protein is Heme A synthase.